The following is a 902-amino-acid chain: MISNLFTKIFGSRNDRTIKNLRKTVALINALETQLEALSDDDLKAKTAEFRERYDNGQSLDDLLPEAFAVVREASKRVNGMRHFDVQLLGGMVLHQGRIAEMRTGEGKTLTATLPAYLNGLTGKGVHVITVNDYLAKRDAETNRPLFEFLGLTVGCNVPGMMPQQKKQAYVADITYGTNNEFGFDYLRDNMAFSIDERVQRPLFYAVVDEVDSILIDEARTPLIISGPAEDSSELYTEINTMVPLLELQEKEDEEGIEGDGDFTIDEKSKQVHLTERGQIKVEELLTERGLIAEGDSLYSAASITLLSHVYAALRAHKLYQKDVDYVVKENEVIIIDEHTGRSMEGRRWSEGLHQAVEAKEGVNIQNENQTLASITFQNYFRLYETLAGMTGTADTEAFEFQSIYGLDTVVMPTNKPMVRDDRADLVYLTQEEKYEAILVDIKDCQERGQPVLVGTISIESSEYLSQFLRKEKIKHNVLNAKFHAQEADIVSDAGLPGTVTIATNMAGRGTDIVLGGNWHSEVEKLENPTDEQIAEIKAAWKIRHDAVIDAGGLHIIGTERHESRRIDNQLRGRSGRQGDAGSSRFYLSMDDALMRIFAGERMTNMMRKLGMQRGEAIEHPWVNRAIENAQRKVEARNFDVRKQLLEYDDVANDQRRVVYSQRNELLEEGDISETITVIRGDVLSNIIDQYIAPQSLAEMWDVPGLEERLKQDFLIELPITQWLADDNKLYEEKLRERIEESVGQAYKQKEEMVGDSVLRQFEKAIMLQSLDQHWKDHLAAMDHLRQGIHLRGYAQKNPKQEYKRESFELFAEMLENLKIDVVSILSKVQVRAEEDVEKVEEQHRKSENAPREYQHEEVEHVGGEAPQSATVMARSEPKVGRNDPCPCGSGQKFKQCCGKLK.

ATP contacts are provided by residues Gln-87, 105–109, and Asp-512; that span reads GEGKT. A disordered region spans residues 836–902; the sequence is DVEKVEEQHR…KFKQCCGKLK (67 aa). Residues 840–863 are compositionally biased toward basic and acidic residues; sequence VEEQHRKSENAPREYQHEEVEHVG. Zn(2+) contacts are provided by Cys-886, Cys-888, Cys-897, and Cys-898.

The protein belongs to the SecA family. As to quaternary structure, monomer and homodimer. Part of the essential Sec protein translocation apparatus which comprises SecA, SecYEG and auxiliary proteins SecDF-YajC and YidC. Zn(2+) serves as cofactor.

It localises to the cell inner membrane. The protein localises to the cytoplasm. It carries out the reaction ATP + H2O + cellular proteinSide 1 = ADP + phosphate + cellular proteinSide 2.. Its function is as follows. Part of the Sec protein translocase complex. Interacts with the SecYEG preprotein conducting channel. Has a central role in coupling the hydrolysis of ATP to the transfer of proteins into and across the cell membrane, serving both as a receptor for the preprotein-SecB complex and as an ATP-driven molecular motor driving the stepwise translocation of polypeptide chains across the membrane. The polypeptide is Protein translocase subunit SecA (Pseudoalteromonas translucida (strain TAC 125)).